A 1045-amino-acid polypeptide reads, in one-letter code: Fibrosin-1-like protein (1045 aa).

Positions 1–12 are enriched in basic residues; the sequence is MEAKVRPSRRSR. Disordered stretches follow at residues 1–86 and 99–315; these read MEAK…DGFA and DMAL…THVP. Residues 13–28 are compositionally biased toward basic and acidic residues; that stretch reads AQRDRGRRREAARDAR. The segment covering 48–63 has biased composition (low complexity); it reads GLRGAPPRGAAPAPRT. The span at 99–123 shows a compositional bias: basic and acidic residues; it reads DMALKPHERKEKWERRLIKKPRESE. Polar residues predominate over residues 183 to 197; that stretch reads EATSSRDPLSDSSAH. Positions 270–280 are enriched in pro residues; the sequence is HAAPCPGPPPG. Phosphoserine is present on Ser340. Residues 443–457 are compositionally biased toward basic residues; that stretch reads QHTHQHTHQHTHQHQ. Disordered stretches follow at residues 443-462 and 719-753; these read QHTH…TFAP and EGSS…PKSV. Pro residues predominate over residues 741–750; the sequence is PSFPAPPPWP. The residue at position 790 (Ser790) is a Phosphoserine. Disordered stretches follow at residues 809-880 and 910-961; these read ELGR…APLQ and AAAP…PALD. The span at 817–837 shows a compositional bias: basic and acidic residues; it reads AEREAEPRVKESRSPAKEEAA. Lys858 is covalently cross-linked (Glycyl lysine isopeptide (Lys-Gly) (interchain with G-Cter in SUMO2)). Residues 910-922 show a composition bias toward low complexity; sequence AAAPAPGSAALLE. Over residues 923–949 the composition is skewed to basic and acidic residues; sequence PPERPYRDREPHGYSPERLRGELERAR. Ser937 and Ser977 each carry phosphoserine. A phosphothreonine mark is found at Thr989 and Thr1010. The interval 991 to 1045 is disordered; that stretch reads PAAAALGAPPPLVTAAGPPTPPGPPRSRTTPLGGLGPGEARDYSPSRNPPEVEAR. Residues 998 to 1015 are compositionally biased toward pro residues; sequence APPPLVTAAGPPTPPGPP. The segment covering 1029 to 1045 has biased composition (basic and acidic residues); it reads EARDYSPSRNPPEVEAR.

It belongs to the AUTS2 family.

This Homo sapiens (Human) protein is Fibrosin-1-like protein (FBRSL1).